A 368-amino-acid chain; its full sequence is Homoserine O-acetyltransferase (368 aa).

The AB hydrolase-1 domain maps to 47–349 (NAILICHALS…SGEGHDSFLL (303 aa)). Ser153 serves as the catalytic Nucleophile. Arg221 contributes to the substrate binding site. Residues Asp311 and His344 contribute to the active site. Asp345 lines the substrate pocket.

It belongs to the AB hydrolase superfamily. MetX family. Homodimer.

It localises to the cytoplasm. It catalyses the reaction L-homoserine + acetyl-CoA = O-acetyl-L-homoserine + CoA. It participates in amino-acid biosynthesis; L-methionine biosynthesis via de novo pathway; O-acetyl-L-homoserine from L-homoserine: step 1/1. Transfers an acetyl group from acetyl-CoA to L-homoserine, forming acetyl-L-homoserine. This is Homoserine O-acetyltransferase from Leptospira borgpetersenii serovar Hardjo-bovis (strain JB197).